We begin with the raw amino-acid sequence, 322 residues long: Protein-L-isoaspartate O-methyltransferase (322 aa).

The disordered stretch occupies residues 1 to 101 (MSGERAKRFP…AKQGDRSAAP (101 aa)). A compositionally biased stretch (basic and acidic residues) spans 14-29 (EDLKREPRKPEGRVAE). 2 stretches are compositionally biased toward low complexity: residues 33–51 (AGDA…PAAA) and 76–91 (HAPA…PQGG). Serine 170 is a catalytic residue.

Belongs to the methyltransferase superfamily. L-isoaspartyl/D-aspartyl protein methyltransferase family.

The protein resides in the cytoplasm. It carries out the reaction [protein]-L-isoaspartate + S-adenosyl-L-methionine = [protein]-L-isoaspartate alpha-methyl ester + S-adenosyl-L-homocysteine. In terms of biological role, catalyzes the methyl esterification of L-isoaspartyl residues in peptides and proteins that result from spontaneous decomposition of normal L-aspartyl and L-asparaginyl residues. It plays a role in the repair and/or degradation of damaged proteins. The chain is Protein-L-isoaspartate O-methyltransferase from Burkholderia mallei (strain NCTC 10247).